The chain runs to 631 residues: Glutamyl-tRNA(Gln) amidotransferase subunit E (631 aa).

Belongs to the GatB/GatE family. GatE subfamily. As to quaternary structure, heterodimer of GatD and GatE.

It carries out the reaction L-glutamyl-tRNA(Gln) + L-glutamine + ATP + H2O = L-glutaminyl-tRNA(Gln) + L-glutamate + ADP + phosphate + H(+). In terms of biological role, allows the formation of correctly charged Gln-tRNA(Gln) through the transamidation of misacylated Glu-tRNA(Gln) in organisms which lack glutaminyl-tRNA synthetase. The reaction takes place in the presence of glutamine and ATP through an activated gamma-phospho-Glu-tRNA(Gln). The GatDE system is specific for glutamate and does not act on aspartate. This chain is Glutamyl-tRNA(Gln) amidotransferase subunit E, found in Methanococcus maripaludis (strain C7 / ATCC BAA-1331).